Consider the following 121-residue polypeptide: Large-conductance mechanosensitive channel (121 aa).

2 helical membrane-spanning segments follow: residues 14 to 34 and 67 to 87; these read VLDLAVGVIIGAAFTALVKSL and GAFLNDVINFVITAFVIFVLI.

This sequence belongs to the MscL family. As to quaternary structure, homopentamer.

Its subcellular location is the cell membrane. Channel that opens in response to stretch forces in the membrane lipid bilayer. May participate in the regulation of osmotic pressure changes within the cell. This is Large-conductance mechanosensitive channel from Lactococcus lactis subsp. cremoris (strain SK11).